A 236-amino-acid polypeptide reads, in one-letter code: Phosphoribosylaminoimidazole-succinocarboxamide synthase (236 aa).

Belongs to the SAICAR synthetase family.

It catalyses the reaction 5-amino-1-(5-phospho-D-ribosyl)imidazole-4-carboxylate + L-aspartate + ATP = (2S)-2-[5-amino-1-(5-phospho-beta-D-ribosyl)imidazole-4-carboxamido]succinate + ADP + phosphate + 2 H(+). Its pathway is purine metabolism; IMP biosynthesis via de novo pathway; 5-amino-1-(5-phospho-D-ribosyl)imidazole-4-carboxamide from 5-amino-1-(5-phospho-D-ribosyl)imidazole-4-carboxylate: step 1/2. The chain is Phosphoribosylaminoimidazole-succinocarboxamide synthase from Streptococcus equi subsp. zooepidemicus (strain H70).